Here is a 345-residue protein sequence, read N- to C-terminus: S-adenosylmethionine:tRNA ribosyltransferase-isomerase (345 aa).

Belongs to the QueA family. Monomer.

It is found in the cytoplasm. It catalyses the reaction 7-aminomethyl-7-carbaguanosine(34) in tRNA + S-adenosyl-L-methionine = epoxyqueuosine(34) in tRNA + adenine + L-methionine + 2 H(+). Its pathway is tRNA modification; tRNA-queuosine biosynthesis. In terms of biological role, transfers and isomerizes the ribose moiety from AdoMet to the 7-aminomethyl group of 7-deazaguanine (preQ1-tRNA) to give epoxyqueuosine (oQ-tRNA). The sequence is that of S-adenosylmethionine:tRNA ribosyltransferase-isomerase from Anaeromyxobacter sp. (strain Fw109-5).